A 1237-amino-acid polypeptide reads, in one-letter code: MSTGEAQQLIQKLLLEALARRLAQPKWLSLLHQLVRRIEAAQDDDGTFDVIPSLEGSHAAECLVKYLLSQSFIDPLLIEYLQALIYGSANRSGVSPDQGPITDVMTVTLHLLANVQAAASNVPAIEIISSVIGQGLLMTFQAPVPFRVSSPSFLALLQRLFADPTYEQDQTPSFPVDHVDTGASDIKVAPASLGFVVANLRLLALAADPAIASPQNLLAPRVSITVLINVGQGLLAYVTQILSAAQTAKNDKLKPDGAILQQLRSMASTSLTEIEAVLRSMNPAWKDEIALLRSLTSQIGVIDQISESFAEANTSKLSTRPTKRKLETLQDAQQRATWDHFLDVSTIAASEKPAVEPETALLMHLLVDHHTSWDFKLDAIKTLFLARRSAAAPSLTLEKSLTAFYFELLVAAIDACAAVVEMPPAFKGAEVYATIWRNALCGMIPELVLQLEQWLDGNQELPLRGQRLEAPHVRLEAALRAALLVMSDRLNVCESATNQSHAHGNVAATNGEEAAGAHANMMSDVLGLGTPPSQPIRAWLLRACIEHSLARPEAIADEFANGHKLASEVQSLTQSLRMDAQLEGLALNTLFETRIPTDHPVELLQRVASDPGTHFIFARQLVLQVQGWLEQHDLESIARWCKALTENACEGGAMLDTIMIYIDPAQMLDPLASILDHQDLGQTSDEPSTLSDILLFVQLLCYRYSTPITRISRYTVSNHDMDTVDSSAPLHRSMPPFLATHLATSSVSYPLSVLSEEDRGLVSRWIHALFGNEGISDDLISASPPTTLLRLSPLLFSQSISACQHGIIDLETLRGGLSYFLQDLLSFALPGALVWLLSEISRTPLQPILDFLSESGLQASVVDVPSSDGTLANGLPRNATSKSVCLEVLALLVDTDACPSSVRQLIAKAFDAFVSTIEADVTAAPQLAVGCETFNLASLKARMEGAGVTARLLSETGASWLQSVAAGHQDSRSKLFSMLTTLQPSVHAMDRLIGALKSGQVGRNGRDQKGLAAWLCFIAPASEPTSALRFVQRLELGDIEESAIEGVVRIVGLVVGLIMAAEAQRATTDAVADDLLALARAADTNARGTKATVADTTAAARPAEADLFDDEPCSPQPPHAAANATSHTSNAAPTVTSAASLLASGELRTTSKQVLDMMALKLVRFRSHMLGEKNAKSTTISAKWATLQSAIADHLAGGEAWHGAQQCRERTQNDAPVNGGKDADSGSGLSAWLSAMS.

Disordered stretches follow at residues 1109–1131 (DDEP…TSNA) and 1202–1226 (HGAQ…ADSG). The segment covering 1119–1131 (HAAANATSHTSNA) has biased composition (low complexity).

The protein belongs to the Mediator complex subunit 5 family. As to quaternary structure, component of the Mediator complex.

It localises to the nucleus. In terms of biological role, component of the Mediator complex, a coactivator involved in the regulated transcription of nearly all RNA polymerase II-dependent genes. Mediator functions as a bridge to convey information from gene-specific regulatory proteins to the basal RNA polymerase II transcription machinery. Mediator is recruited to promoters by direct interactions with regulatory proteins and serves as a scaffold for the assembly of a functional preinitiation complex with RNA polymerase II and the general transcription factors. The polypeptide is Mediator of RNA polymerase II transcription subunit 5 (NUT1) (Mycosarcoma maydis (Corn smut fungus)).